Consider the following 546-residue polypeptide: Medium-chain-fatty-acid--CoA ligase (546 aa).

Position 185 (T185) interacts with Mg(2+). 2 residues coordinate ATP: W235 and T329. E330 contributes to the Mg(2+) binding site. Residues D417, K434, K438, and W443 each contribute to the ATP site.

The protein belongs to the ATP-dependent AMP-binding enzyme family.

Its subcellular location is the cytoplasm. It catalyses the reaction a medium-chain fatty acid + ATP + CoA = a medium-chain fatty acyl-CoA + AMP + diphosphate. The protein operates within lipid metabolism; fatty acid metabolism. In Ectopseudomonas oleovorans (Pseudomonas oleovorans), this protein is Medium-chain-fatty-acid--CoA ligase.